The primary structure comprises 258 residues: tRNA pseudouridine synthase A (258 aa).

Asp-53 acts as the Nucleophile in catalysis. Position 111 (Tyr-111) interacts with substrate.

It belongs to the tRNA pseudouridine synthase TruA family. As to quaternary structure, homodimer.

The enzyme catalyses uridine(38/39/40) in tRNA = pseudouridine(38/39/40) in tRNA. Formation of pseudouridine at positions 38, 39 and 40 in the anticodon stem and loop of transfer RNAs. The protein is tRNA pseudouridine synthase A of Streptococcus agalactiae serotype III (strain NEM316).